A 547-amino-acid polypeptide reads, in one-letter code: Dihydroxy-acid dehydratase (547 aa).

A Mg(2+)-binding site is contributed by aspartate 78. [2Fe-2S] cluster is bound at residue cysteine 119. The Mg(2+) site is built by aspartate 120 and lysine 121. An N6-carboxylysine modification is found at lysine 121. Cysteine 191 is a [2Fe-2S] cluster binding site. Glutamate 439 is a Mg(2+) binding site. Residue serine 464 is the Proton acceptor of the active site.

This sequence belongs to the IlvD/Edd family. Homodimer. It depends on [2Fe-2S] cluster as a cofactor. Mg(2+) is required as a cofactor.

The enzyme catalyses (2R)-2,3-dihydroxy-3-methylbutanoate = 3-methyl-2-oxobutanoate + H2O. It catalyses the reaction (2R,3R)-2,3-dihydroxy-3-methylpentanoate = (S)-3-methyl-2-oxopentanoate + H2O. The protein operates within amino-acid biosynthesis; L-isoleucine biosynthesis; L-isoleucine from 2-oxobutanoate: step 3/4. It participates in amino-acid biosynthesis; L-valine biosynthesis; L-valine from pyruvate: step 3/4. Functions in the biosynthesis of branched-chain amino acids. Catalyzes the dehydration of (2R,3R)-2,3-dihydroxy-3-methylpentanoate (2,3-dihydroxy-3-methylvalerate) into 2-oxo-3-methylpentanoate (2-oxo-3-methylvalerate) and of (2R)-2,3-dihydroxy-3-methylbutanoate (2,3-dihydroxyisovalerate) into 2-oxo-3-methylbutanoate (2-oxoisovalerate), the penultimate precursor to L-isoleucine and L-valine, respectively. This chain is Dihydroxy-acid dehydratase, found in Methanospirillum hungatei JF-1 (strain ATCC 27890 / DSM 864 / NBRC 100397 / JF-1).